The sequence spans 234 residues: MPRKHLIANQINKKQQSNAKLWQKLAKEIKAAVKVGGTDPETNYRLKAAIDKALTYNLSKDSINRNIYGNSNKEDDQLIEAEYEIYGPGGLGIIVRTLSDNPNRVISSLNGYISKLKGSLAKPNSVKINFQEQGIILTDLNNYHDEALLELLIDYELIDINSDEEGYEIITVPNAYYEVKKKLEAAGFKIHHSELKLIPLLYVQLTPEQNEMFERFSASCENDDDIQWIVANNQ.

Belongs to the TACO1 family.

Its subcellular location is the cytoplasm. In Mycoplasmoides gallisepticum (strain R(low / passage 15 / clone 2)) (Mycoplasma gallisepticum), this protein is Probable transcriptional regulatory protein MYCGA1330.